Reading from the N-terminus, the 318-residue chain is Ankyrin repeat and SOCS box protein 7 (318 aa).

ANK repeat units lie at residues 13–42 (QEEL…SPNG), 46–75 (NGWT…DPTV), 80–109 (GGFT…RSDI), 116–145 (DGWT…EVDP), 149–178 (KGTT…NIDI), 180–208 (NGFL…DTDL), and 213–242 (DGQT…DTNT). In terms of domain architecture, SOCS box spans 265-318 (LDFLQEVTRQPRNLQDLCRIKIRQCIGLQNLKLLDELPIAKVMKDYLKHKFDDI).

This sequence belongs to the ankyrin SOCS box (ASB) family. In terms of assembly, interacts with CUL5. Interacts with RNF7. Interacts with PSRC1.

The protein operates within protein modification; protein ubiquitination. In terms of biological role, probable substrate-recognition component of a SCF-like ECS (Elongin-Cullin-SOCS-box protein) E3 ubiquitin-protein ligase complex which mediates the ubiquitination and subsequent proteasomal degradation of target proteins. Plays a role in spindle dynamics and genome integrity by targeting the mitotic progression protein PSRC1 for proteasomal degradation in a cell cycle-dependent manner. Also participates in meiosis by mediating the proper attachment between kinetochores and microtubules. This Macaca fascicularis (Crab-eating macaque) protein is Ankyrin repeat and SOCS box protein 7 (ASB7).